A 218-amino-acid chain; its full sequence is 5-oxoprolinase subunit B (218 aa).

The protein belongs to the PxpB family. Forms a complex composed of PxpA, PxpB and PxpC.

The enzyme catalyses 5-oxo-L-proline + ATP + 2 H2O = L-glutamate + ADP + phosphate + H(+). Its function is as follows. Catalyzes the cleavage of 5-oxoproline to form L-glutamate coupled to the hydrolysis of ATP to ADP and inorganic phosphate. This is 5-oxoprolinase subunit B from Escherichia coli O157:H7.